We begin with the raw amino-acid sequence, 417 residues long: Protein FAM181B (417 aa).

A disordered region spans residues 104-147; sequence CSGLMGTAPPRPASPSAADAPAKRPPGAPTVATPAHCKAAPRRE.

It belongs to the FAM181 family.

This chain is Protein FAM181B (Fam181b), found in Mus musculus (Mouse).